We begin with the raw amino-acid sequence, 379 residues long: Forkhead box protein F1 (379 aa).

Residues Met1–Arg45 are disordered. Residues His12–Ala24 are compositionally biased toward gly residues. The segment at residues Glu47–Arg138 is a DNA-binding region (fork-head).

In terms of tissue distribution, expressed in lung and placenta.

The protein localises to the nucleus. Functionally, probable transcription activator for a number of lung-specific genes. This chain is Forkhead box protein F1 (FOXF1), found in Homo sapiens (Human).